The chain runs to 341 residues: L-sulfolactate dehydrogenase (341 aa).

Belongs to the LDH2/MDH2 oxidoreductase family.

It localises to the cytoplasm. The catalysed reaction is a (2S)-2-hydroxycarboxylate + NAD(+) = a 2-oxocarboxylate + NADH + H(+). It functions in the pathway cofactor biosynthesis; coenzyme M biosynthesis; sulfoacetaldehyde from phosphoenolpyruvate and sulfite: step 3/4. Its pathway is cofactor biosynthesis; 5,6,7,8-tetrahydromethanopterin biosynthesis. Catalyzes the reduction of sulfopyruvate to (R)-sulfolactate. Involved in the biosynthesis of both coenzyme M (with (R)-sulfolactate) and methanopterin (with alpha-ketoglutarate). The protein is L-sulfolactate dehydrogenase (comC) of Methanothermobacter thermautotrophicus (strain ATCC 29096 / DSM 1053 / JCM 10044 / NBRC 100330 / Delta H) (Methanobacterium thermoautotrophicum).